The sequence spans 263 residues: Isoprenyl transferase (263 aa).

Residue D26 is part of the active site. A Mg(2+)-binding site is contributed by D26. Substrate is bound by residues 27-30, W31, R39, H43, and 71-73; these read GNGR and SSE. N74 serves as the catalytic Proton acceptor. Substrate contacts are provided by residues W75, R77, R191, and 197–199; that span reads RIS. E210 serves as a coordination point for Mg(2+). Residues 241–263 are disordered; the sequence is GRTSEQIAGQQENKNTVSNEDRV. Over residues 243-263 the composition is skewed to polar residues; that stretch reads TSEQIAGQQENKNTVSNEDRV.

It belongs to the UPP synthase family. Homodimer. It depends on Mg(2+) as a cofactor.

Its function is as follows. Catalyzes the condensation of isopentenyl diphosphate (IPP) with allylic pyrophosphates generating different type of terpenoids. This is Isoprenyl transferase from Nitrosomonas europaea (strain ATCC 19718 / CIP 103999 / KCTC 2705 / NBRC 14298).